Reading from the N-terminus, the 279-residue chain is Putative E3 ubiquitin-protein ligase C36B7.05c (279 aa).

An FYVE-type zinc finger spans residues 27-122; it reads DDESAQCNNC…VCVNCRQQLS (96 aa). The Zn(2+) site is built by C33, C36, C49, C52, C57, C60, C114, and C117. S200 carries the phosphoserine modification. The RING-type; atypical zinc-finger motif lies at 230–273; that stretch reads CIICFEEFAAGDRVARIEYCLCIFHLKCYRDWLSTGAAGCPVHA.

The protein localises to the cytoplasm. The protein resides in the nucleus. It is found in the endosome membrane. Its subcellular location is the vacuole membrane. The enzyme catalyses S-ubiquitinyl-[E2 ubiquitin-conjugating enzyme]-L-cysteine + [acceptor protein]-L-lysine = [E2 ubiquitin-conjugating enzyme]-L-cysteine + N(6)-ubiquitinyl-[acceptor protein]-L-lysine.. The protein operates within protein modification; protein ubiquitination. Functionally, functions as an E3 ubiquitin-protein ligase. Binds phospholipid vesicles containing phosphatidylinositol 3-phosphate. This is Putative E3 ubiquitin-protein ligase C36B7.05c from Schizosaccharomyces pombe (strain 972 / ATCC 24843) (Fission yeast).